A 462-amino-acid chain; its full sequence is Glutamate--tRNA ligase (462 aa).

The short motif at 11 to 21 (PSPTGFIHLGN) is the 'HIGH' region element. The 'KMSKS' region signature appears at 243–247 (KMSKR). ATP is bound at residue lysine 246.

Belongs to the class-I aminoacyl-tRNA synthetase family. Glutamate--tRNA ligase type 1 subfamily. Monomer.

It is found in the cytoplasm. It catalyses the reaction tRNA(Glu) + L-glutamate + ATP = L-glutamyl-tRNA(Glu) + AMP + diphosphate. Catalyzes the attachment of glutamate to tRNA(Glu) in a two-step reaction: glutamate is first activated by ATP to form Glu-AMP and then transferred to the acceptor end of tRNA(Glu). The chain is Glutamate--tRNA ligase from Albidiferax ferrireducens (strain ATCC BAA-621 / DSM 15236 / T118) (Rhodoferax ferrireducens).